The primary structure comprises 100 residues: Urease subunit gamma (100 aa).

Belongs to the urease gamma subunit family. In terms of assembly, heterotrimer of UreA (gamma), UreB (beta) and UreC (alpha) subunits. Three heterotrimers associate to form the active enzyme.

The protein localises to the cytoplasm. It carries out the reaction urea + 2 H2O + H(+) = hydrogencarbonate + 2 NH4(+). Its pathway is nitrogen metabolism; urea degradation; CO(2) and NH(3) from urea (urease route): step 1/1. This chain is Urease subunit gamma, found in Laribacter hongkongensis (strain HLHK9).